The sequence spans 78 residues: Acyl carrier protein (78 aa).

The 75-residue stretch at 4 to 78 (AEIKDKVYDI…QQAIDYIVKK (75 aa)) folds into the Carrier domain. At serine 39 the chain carries O-(pantetheine 4'-phosphoryl)serine.

Belongs to the acyl carrier protein (ACP) family. 4'-phosphopantetheine is transferred from CoA to a specific serine of apo-ACP by AcpS. This modification is essential for activity because fatty acids are bound in thioester linkage to the sulfhydryl of the prosthetic group.

The protein resides in the cytoplasm. It functions in the pathway lipid metabolism; fatty acid biosynthesis. Its function is as follows. Carrier of the growing fatty acid chain in fatty acid biosynthesis. The protein is Acyl carrier protein of Chlorobium limicola (strain DSM 245 / NBRC 103803 / 6330).